The sequence spans 156 residues: ATP synthase subunit b (156 aa).

A helical transmembrane segment spans residues 5 to 25 (LTLIGQAIAFAVFVWFCMKFV).

This sequence belongs to the ATPase B chain family. F-type ATPases have 2 components, F(1) - the catalytic core - and F(0) - the membrane proton channel. F(1) has five subunits: alpha(3), beta(3), gamma(1), delta(1), epsilon(1). F(0) has three main subunits: a(1), b(2) and c(10-14). The alpha and beta chains form an alternating ring which encloses part of the gamma chain. F(1) is attached to F(0) by a central stalk formed by the gamma and epsilon chains, while a peripheral stalk is formed by the delta and b chains.

It localises to the cell inner membrane. F(1)F(0) ATP synthase produces ATP from ADP in the presence of a proton or sodium gradient. F-type ATPases consist of two structural domains, F(1) containing the extramembraneous catalytic core and F(0) containing the membrane proton channel, linked together by a central stalk and a peripheral stalk. During catalysis, ATP synthesis in the catalytic domain of F(1) is coupled via a rotary mechanism of the central stalk subunits to proton translocation. In terms of biological role, component of the F(0) channel, it forms part of the peripheral stalk, linking F(1) to F(0). This Chromohalobacter salexigens (strain ATCC BAA-138 / DSM 3043 / CIP 106854 / NCIMB 13768 / 1H11) protein is ATP synthase subunit b.